A 163-amino-acid polypeptide reads, in one-letter code: 3-isopropylmalate dehydratase small subunit (163 aa).

This sequence belongs to the LeuD family. LeuD type 2 subfamily. In terms of assembly, heterodimer of LeuC and LeuD.

It catalyses the reaction (2R,3S)-3-isopropylmalate = (2S)-2-isopropylmalate. The protein operates within amino-acid biosynthesis; L-leucine biosynthesis; L-leucine from 3-methyl-2-oxobutanoate: step 2/4. Catalyzes the isomerization between 2-isopropylmalate and 3-isopropylmalate, via the formation of 2-isopropylmaleate. This is 3-isopropylmalate dehydratase small subunit from Brachyspira hyodysenteriae (strain ATCC 49526 / WA1).